A 185-amino-acid chain; its full sequence is Phospholipase A2 inhibitor 25 kDa subunit (185 aa).

8 disulfides stabilise this stretch: cysteine 3-cysteine 27, cysteine 6-cysteine 13, cysteine 20-cysteine 48, cysteine 54-cysteine 75, cysteine 76-cysteine 81, cysteine 101-cysteine 126, cysteine 119-cysteine 146, and cysteine 152-cysteine 172.

It belongs to the CNF-like-inhibitor family. In terms of assembly, heterodimer with phospholipase A2 inhibitor 31 kDa. As to expression, expressed by the liver.

It localises to the secreted. Its function is as follows. Inhibits the enzymatic activity of phospholipase A2. The polypeptide is Phospholipase A2 inhibitor 25 kDa subunit (Naja kaouthia (Monocled cobra)).